The sequence spans 592 residues: PiggyBac transposable element-derived protein 2 (592 aa).

Residues 31-69 form a disordered region; that stretch reads EEEESNNNREEIFIAPPDNAAGEFTDEDSGDEDSQRGAH.

The polypeptide is PiggyBac transposable element-derived protein 2 (PGBD2) (Homo sapiens (Human)).